Here is a 509-residue protein sequence, read N- to C-terminus: Histidine--tRNA ligase (509 aa).

The protein belongs to the class-II aminoacyl-tRNA synthetase family. In terms of assembly, homodimer.

The protein localises to the cytoplasm. It carries out the reaction tRNA(His) + L-histidine + ATP = L-histidyl-tRNA(His) + AMP + diphosphate + H(+). The protein is Histidine--tRNA ligase of Rhodopseudomonas palustris (strain TIE-1).